A 315-amino-acid chain; its full sequence is Protein-export membrane protein SecF (315 aa).

The next 6 membrane-spanning stretches (helical) occupy residues Met35–Pro55, Gln152–Phe172, Ile181–Ile201, Thr205–Leu225, Leu242–Leu264, and Leu282–Ala302.

It belongs to the SecD/SecF family. SecF subfamily. As to quaternary structure, part of the protein translocation apparatus. Forms a complex with SecD.

The protein resides in the cell membrane. Its function is as follows. Involved in protein export. This Thermococcus gammatolerans (strain DSM 15229 / JCM 11827 / EJ3) protein is Protein-export membrane protein SecF.